The chain runs to 97 residues: MSRRCELTAKAPLVGHKVSHSNIKTKRRFLPNLVNVTFVSETLSSSVRFRVSTHALRSVDHRGGFDAFLLKARDSELSPKAIELKRQIQKKQAAKAG.

It belongs to the bacterial ribosomal protein bL28 family.

The protein is Large ribosomal subunit protein bL28 of Nitrobacter winogradskyi (strain ATCC 25391 / DSM 10237 / CIP 104748 / NCIMB 11846 / Nb-255).